The sequence spans 100 residues: uncharacterized protein (100 aa).

The tract at residues 42 to 84 (PGEPWRTAGGIGEGGAGGDGAAAGGEGDVHGRPAGAEDGEDGA) is disordered. The span at 50–67 (GGIGEGGAGGDGAAAGGE) shows a compositional bias: gly residues.

This is an uncharacterized protein from Torque teno tamarin virus (isolate So-TTV2).